The chain runs to 523 residues: Leucine-rich repeat transmembrane neuronal protein 1 (523 aa).

The N-terminal stretch at 1 to 34 (MDFLLLGLCLHWLLRRPSGVVLCLLGACFQMLPA) is a signal peptide. The LRRNT domain maps to 35-63 (APSGCPGQCRCEGRLLYCEALNLTEAPHN). At 35-428 (APSGCPGQCR…HAENAVQIHK (394 aa)) the chain is on the extracellular side. 2 N-linked (GlcNAc...) asparagine glycosylation sites follow: N56 and N63. LRR repeat units lie at residues 64–87 (LSGL…QFTG), 89–111 (MQLT…AFQK), 112–135 (LRRV…TFRP), 136–159 (MPNL…LFHG), 161–183 (RKLT…IFQD), 184–207 (CRSL…SFAG), 209–231 (FKLT…HFPR), 233–255 (ISLN…LDWV), 256–278 (WNLE…VFET), and 280–302 (PYLQ…ILNS). N130 carries N-linked (GlcNAc...) asparagine glycosylation. The 52-residue stretch at 314-365 (NLWDCGRNVCALASWLSNFQGRYDANLQCASPEYAQGEDVLDAVYAFHLCED) folds into the LRRCT domain. The N-linked (GlcNAc...) asparagine glycan is linked to N381. Residues 429-449 (VVTGTMALIFSFLIVVLVLYV) traverse the membrane as a helical segment. Topologically, residues 450–523 (SWKCFPASLR…HQQPARECEV (74 aa)) are cytoplasmic. The May be involved in DLG4-binding signature appears at 520-523 (ECEV).

It belongs to the LRRTM family. As to quaternary structure, interacts with DLG4.

It localises to the cell membrane. The protein localises to the postsynaptic cell membrane. In terms of biological role, exhibits strong synaptogenic activity, restricted to excitatory presynaptic differentiation, acting at both pre- and postsynaptic level. This is Leucine-rich repeat transmembrane neuronal protein 1 (Lrrtm1) from Rattus norvegicus (Rat).